A 492-amino-acid polypeptide reads, in one-letter code: Ketol-acid reductoisomerase (NADP(+)) (492 aa).

The KARI N-terminal Rossmann domain occupies 15–208 (AQLGKCRFMA…GGHRAGVLES (194 aa)). NADP(+) is bound by residues 45–48 (CGAQ), arginine 68, arginine 76, serine 78, and 108–110 (DKQ). Histidine 132 is an active-site residue. NADP(+) is bound at residue glycine 158. KARI C-terminal knotted domains are found at residues 209-344 (SFVA…NAPQ) and 345-485 (FEGK…MTDM). Residues aspartate 217, glutamate 221, glutamate 389, and glutamate 393 each contribute to the Mg(2+) site. Substrate is bound at residue serine 414.

The protein belongs to the ketol-acid reductoisomerase family. Mg(2+) serves as cofactor.

The enzyme catalyses (2R)-2,3-dihydroxy-3-methylbutanoate + NADP(+) = (2S)-2-acetolactate + NADPH + H(+). The catalysed reaction is (2R,3R)-2,3-dihydroxy-3-methylpentanoate + NADP(+) = (S)-2-ethyl-2-hydroxy-3-oxobutanoate + NADPH + H(+). It functions in the pathway amino-acid biosynthesis; L-isoleucine biosynthesis; L-isoleucine from 2-oxobutanoate: step 2/4. The protein operates within amino-acid biosynthesis; L-valine biosynthesis; L-valine from pyruvate: step 2/4. In terms of biological role, involved in the biosynthesis of branched-chain amino acids (BCAA). Catalyzes an alkyl-migration followed by a ketol-acid reduction of (S)-2-acetolactate (S2AL) to yield (R)-2,3-dihydroxy-isovalerate. In the isomerase reaction, S2AL is rearranged via a Mg-dependent methyl migration to produce 3-hydroxy-3-methyl-2-ketobutyrate (HMKB). In the reductase reaction, this 2-ketoacid undergoes a metal-dependent reduction by NADPH to yield (R)-2,3-dihydroxy-isovalerate. The sequence is that of Ketol-acid reductoisomerase (NADP(+)) from Yersinia pseudotuberculosis serotype O:3 (strain YPIII).